A 554-amino-acid chain; its full sequence is Terpene synthase 17 (554 aa).

Residues Asp306, Asp310, and Glu458 each contribute to the Mg(2+) site. The short motif at 306–310 is the DDXXD motif element; it reads DDTYD.

The protein belongs to the terpene synthase family. Tpsa subfamily. The cofactor is Mg(2+). Requires Mn(2+) as cofactor. Mostly expressed in stem and trichomes, to a lower extent in leaves, flowers and roots and, at low levels, in fruits.

It catalyses the reaction (2Z,6Z)-farnesyl diphosphate = beta-bisabolene + diphosphate. It carries out the reaction (2E,6E)-farnesyl diphosphate = (+)-valencene + diphosphate. The enzyme catalyses (2E,6E)-farnesyl diphosphate = (E)-beta-farnesene + diphosphate. The catalysed reaction is (2E,6E)-farnesyl diphosphate = gamma-gurjunene + diphosphate. It catalyses the reaction (2Z,6Z)-farnesyl diphosphate = (E)-gamma-bisabolene + diphosphate. It carries out the reaction (2E)-geranyl diphosphate = limonene + diphosphate. The enzyme catalyses (2E)-geranyl diphosphate = beta-myrcene + diphosphate. The catalysed reaction is (2E)-geranyl diphosphate = (E)-beta-ocimene + diphosphate. It catalyses the reaction (2E)-geranyl diphosphate = terpinolene + diphosphate. It carries out the reaction (2E)-geranyl diphosphate = gamma-terpinene + diphosphate. The enzyme catalyses (2Z,6Z)-farnesyl diphosphate = (Z)-gamma-bisabolene + diphosphate. The catalysed reaction is (2E,6E)-farnesyl diphosphate = (1S,5S,6R)-alpha-bergamotene + diphosphate. It catalyses the reaction (2Z,6Z)-farnesyl diphosphate = (1S,5S,6S)-alpha-bergamotene + diphosphate. It functions in the pathway secondary metabolite biosynthesis; terpenoid biosynthesis. Sesquiterpene synthase involved in the biosynthesis of volatile compounds. Mediates the conversion of (2E,6E)-farnesyl diphosphate (FPP) into gamma-gurjunene, (E)-beta-farnesene and (+)-valencene, and of (2Z,6Z)-farnesyl diphosphate ((ZZ)-FPP) into (E)-alpha-bergamotene and (Z)-gamma-bisabolene as well as beta-bisabolene, (Z)-alpha-bergamotene and (E)-gamma-bisabolene to a lower extent. Can act with a low efficiency as a monoterpene synthase with geranyl diphosphate (GPP) as substrate, thus producing beta-myrcene, (E)-beta-ocimene, limonene, terpinolene, gamma-terpinene and (Z)-beta-ocimene. The sequence is that of Terpene synthase 17 from Solanum lycopersicum (Tomato).